The primary structure comprises 302 residues: MMTFATQLNAAILRTGSVTCVGLDPRLEQLPKPLRDSVSEKRKDSVAAAYTQFCCEIIDAVAGLVPCVKPQAAFFEQLGPAGMVSLGEVISHANQAGLIVITDGKRNDIGSTATAYADAYLGSAEPDRSPWGSDALTVSPYLGRDSLEPFVEVCDRRAAGIFVLVKTSNPGGGYLQDLSVDGKTIYQSVAELVTELNKSRLDADGYGPVGAVVGATYPEQLVELRKAMPHSILLVPGFGAQGGSADDVRAAMDANGAGAVVNSSRHIVFAHKREEFSVAADESNWQDAVRAATIQMNEQLKG.

Lys-105 acts as the Proton donor in catalysis.

It belongs to the OMP decarboxylase family. Type 2 subfamily.

It catalyses the reaction orotidine 5'-phosphate + H(+) = UMP + CO2. The protein operates within pyrimidine metabolism; UMP biosynthesis via de novo pathway; UMP from orotate: step 2/2. The protein is Orotidine 5'-phosphate decarboxylase of Rhodopirellula baltica (strain DSM 10527 / NCIMB 13988 / SH1).